We begin with the raw amino-acid sequence, 333 residues long: Biotin synthase (333 aa).

The Radical SAM core domain maps to 54-287; the sequence is ANHGAIHACS…TKIIKFAAGR (234 aa). Residues cysteine 72, cysteine 76, and cysteine 79 each coordinate [4Fe-4S] cluster. Residues cysteine 151, cysteine 212, and lysine 282 each coordinate [2Fe-2S] cluster.

Belongs to the radical SAM superfamily. Biotin synthase family. Homodimer. [4Fe-4S] cluster is required as a cofactor. The cofactor is [2Fe-2S] cluster.

The enzyme catalyses (4R,5S)-dethiobiotin + (sulfur carrier)-SH + 2 reduced [2Fe-2S]-[ferredoxin] + 2 S-adenosyl-L-methionine = (sulfur carrier)-H + biotin + 2 5'-deoxyadenosine + 2 L-methionine + 2 oxidized [2Fe-2S]-[ferredoxin]. Its pathway is cofactor biosynthesis; biotin biosynthesis; biotin from 7,8-diaminononanoate: step 2/2. In terms of biological role, catalyzes the conversion of dethiobiotin (DTB) to biotin by the insertion of a sulfur atom into dethiobiotin via a radical-based mechanism. The protein is Biotin synthase of Chlorobaculum tepidum (strain ATCC 49652 / DSM 12025 / NBRC 103806 / TLS) (Chlorobium tepidum).